The sequence spans 244 residues: Lectin (244 aa).

A disordered region spans residues T1–K20.

The protein belongs to the leguminous lectin family. Homodimer. In contrast to other Lathyrus lectins which are tetramer of two alpha and two beta chains.

The polypeptide is Lectin (Lathyrus sphaericus (Spring vetchling)).